A 121-amino-acid chain; its full sequence is N-alpha-acetyltransferase 38, NatC auxiliary subunit (121 aa).

One can recognise a Sm domain in the interval 40-113 (PGRRKLQKWL…IVSLSIDEPD (74 aa)).

It belongs to the snRNP Sm proteins family. As to quaternary structure, component of the N-terminal acetyltransferase C (NatC) complex, which is composed of Naa35, Sbat/Naa38 and Naa30A. Interacts with Smn and Hez; along with Hez and Vlet, may form an accessory subcomplex involved in SMN complex function.

The protein resides in the cytoplasm. It localises to the nucleus. Functionally, auxiliary component of the N-terminal acetyltransferase C (NatC) complex which catalyzes acetylation of N-terminal methionine residues. May have an accessory function in the survival motor neuron (SMN) complex. This Drosophila melanogaster (Fruit fly) protein is N-alpha-acetyltransferase 38, NatC auxiliary subunit.